We begin with the raw amino-acid sequence, 152 residues long: Protein-export protein SecB (152 aa).

Belongs to the SecB family. Homotetramer, a dimer of dimers. One homotetramer interacts with 1 SecA dimer.

It localises to the cytoplasm. In terms of biological role, one of the proteins required for the normal export of preproteins out of the cell cytoplasm. It is a molecular chaperone that binds to a subset of precursor proteins, maintaining them in a translocation-competent state. It also specifically binds to its receptor SecA. The chain is Protein-export protein SecB from Rickettsia africae (strain ESF-5).